Consider the following 183-residue polypeptide: Adenine phosphoribosyltransferase (183 aa).

This sequence belongs to the purine/pyrimidine phosphoribosyltransferase family. As to quaternary structure, homodimer.

The protein localises to the cytoplasm. It carries out the reaction AMP + diphosphate = 5-phospho-alpha-D-ribose 1-diphosphate + adenine. Its pathway is purine metabolism; AMP biosynthesis via salvage pathway; AMP from adenine: step 1/1. Functionally, catalyzes a salvage reaction resulting in the formation of AMP, that is energically less costly than de novo synthesis. This chain is Adenine phosphoribosyltransferase, found in Corynebacterium kroppenstedtii (strain DSM 44385 / JCM 11950 / CIP 105744 / CCUG 35717).